The chain runs to 446 residues: Amino-acid acetyltransferase (446 aa).

The 133-residue stretch at 299-431 (EQVRDAEIDD…SHLPMKKQKL (133 aa)) folds into the N-acetyltransferase domain.

Belongs to the acetyltransferase family. ArgA subfamily.

It is found in the cytoplasm. The enzyme catalyses L-glutamate + acetyl-CoA = N-acetyl-L-glutamate + CoA + H(+). Its pathway is amino-acid biosynthesis; L-arginine biosynthesis; N(2)-acetyl-L-ornithine from L-glutamate: step 1/4. This chain is Amino-acid acetyltransferase, found in Aliivibrio fischeri (strain MJ11) (Vibrio fischeri).